The primary structure comprises 209 residues: Ion-translocating oxidoreductase complex subunit G (209 aa).

A helical membrane pass occupies residues A9–L29. The residue at position 175 (T175) is an FMN phosphoryl threonine.

It belongs to the RnfG family. In terms of assembly, the complex is composed of six subunits: RnfA, RnfB, RnfC, RnfD, RnfE and RnfG. Requires FMN as cofactor.

The protein localises to the cell inner membrane. Its function is as follows. Part of a membrane-bound complex that couples electron transfer with translocation of ions across the membrane. The polypeptide is Ion-translocating oxidoreductase complex subunit G (Pectobacterium atrosepticum (strain SCRI 1043 / ATCC BAA-672) (Erwinia carotovora subsp. atroseptica)).